A 3119-amino-acid polypeptide reads, in one-letter code: MATLEKLMKAFESLKSFQQQQQQQPPPQAPPPPPPPPPQPPQPPPQGQPPPPPPPLPGPAEEPLHRPKKELSATKKDRVNHCLTICENIVAQSLRNSPEFQKLLGIAMELFLLCSNDAESDVRMVADECLNKVIKALMDSNLPRLQLELYKEIKKNGAPRSLRAALWRFAELAHLVRPQKCRPYLVNLLPCLTRTSKRPEESVQETLAAAVPKIMASFGNFANDNEIKVLLKAFIANLKSSSPTVRRTAAGSAVSICQHSRRTQYFYNWLLNVLLGLLVPMEEEHSTLLILGVLLTLRCLVPLLQQQVKDTSLKGSFGVTRKEMEVSPSTEQLVQVYELTLHHTQHQDHNVVTGALELLQQLFRTPPPELLQALTTPGGLGQLTLVQEEARGRGRSGSIVELLAGGGSSCSPVLSRKQKGKVLLGEEEALEDDSESRSDVSSSAFAASVKSEIGGELAASSGVSTPGSVGHDIITEQPRSQHTLQADSVDLSGCDLTSAATDGDEEDILSHSSSQFSAVPSDPAMDLNDGTQASSPISDSSQTTTEGPDSAVTPSDSSEIVLDGADSQYLGMQIGQPQEDDEEGAAGVLSGEVSDVFRNSSLALQQAHLLERMGHSRQPSDSSIDKYVTRDEVAEASDPESKPCRIKGDIGQPNDDDSAPLVHCVRLLSASFLLTGEKKALVPDRDVRVSVKALALSCIGAAVALHPESFFSRLYKVPLNTTESTEEQYVSDILNYIDHGDPQVRGATAILCGTLVYSILSRSRLRVGDWLGNIRTLTGNTFSLVDCIPLLQKTLKDESSVTCKLACTAVRHCVLSLCSSSYSDLGLQLLIDMLPLKNSSYWLVRTELLDTLAEIDFRLVSFLEAKAESLHRGAHHYTGFLKLQERVLNNVVIYLLGDEDPRVRHVAATSLTRLVPKLFYKCDQGQADPVVAVARDQSSVYLKLLMHETQPPSHFSVSTITRIYRGYSLLPSITDVTMENNLSRVVAAVSHELITSTTRALTFGCCEALCLLSAAFPVCTWSLGWHCGVPPLSASDESRKSCTVGMASMILTLLSSAWFPLDLSAHQDALILAGNLLAASAPKSLRSSWTSEEEANSAATRQEEIWPALGDRTLVPLVEQLFSHLLKVINICAHVLDDVTPGPAIKAALPSLTNPPSLSPIRRKGKEKEPGEQASTPMSPKKVGEASAASRQSDTSGPVTASKSSSLGSFYHLPSYLKLHDVLKATHANYKVTLDLQNSTEKFGGFLRSALDVLSQILELATLQDIGKCVEEVLGYLKSCFSREPMMATVCVQQLLKTLFGTNLASQFDGLSSNPSKSQCRAQRLGSSSVRPGLYHYCFMAPYTHFTQALADASLRNMVQAEQERDASGWFDVLQKVSAQLKTNLTSVTKNRADKNAIHNHIRLFEPLVIKALKQYTTTTSVQLQKQVLDLLAQLVQLRVNYCLLDSDQVFIGFVLKQFEYIEVGQFRESEAIIPNIFFFLVLLSYERYHSKQIIGIPKIIQLCDGIMASGRKAVTHAIPALQPIVHDLFVLRGTNKADAGKELETQKEVVVSMLLRLIQYHQVLEMFILVLQQCHKENEDKWKRLSRQVADIILPMLAKQQMHIDSHEALGVLNTLFEILAPSSLRPVDMLLRSMFITPSTMASVSTVQLWISGILAILRVLISQSTEDIVLCRIQELSFSPHLLSCPVINRLRGGGGNVTLGECSEGKQKSLPEDTFSRFLLQLVGILLEDIVTKQLKVDMSEQQHTFYCQELGTLLMCLIHIFKSGMFRRITAAATRLFTSDGCEGSFYTLESLNARVRSMVPTHPALVLLWCQILLLINHTDHRWWAEVQQTPKRHSLSCTKSLNPQKSGEEEDSGSAAQLGMCNREIVRRGALILFCDYVCQNLHDSEHLTWLIVNHIQDLISLSHEPPVQDFISAIHRNSAASGLFIQAIQSRCENLSTPTTLKKTLQCLEGIHLSQSGAVLTLYVDRLLGTPFRALARMVDTLACRRVEMLLAANLQSSMAQLPEEELNRIQEHLQNSGLAQRHQRLYSLLDRFRLSTVQDSLSPLPPVTSHPLDGDGHTSLETVSPDKDWYLQLVRSQCWTRSDSALLEGAELVNRIPAEDMNDFMMSSEFNLSLLAPCLSLGMSEIANGQKSPLFEAARGVILNRVTSVVQQLPAVHQVFQPFLPIEPTAYWNKLNDLLGDTTSYQSLTILARALAQYLVVLSKVPAHLHLPPEKEGDTVKFVVMTVEALSWHLIHEQIPLSLDLQAGLDCCCLALQVPGLWGVLSSPEYVTHACSLIHCVRFILEAIAVQPGDQLLGPESRSHTPRAVRKEEVDSDIQNLSHVTSACEMVADMVESLQSVLALGHKRNSTLPSFLTAVLKNIVISLARLPLVNSYTRVPPLVWKLGWSPKPGGDFGTVFPEIPVEFLQEKEILKEFIYRINTLGWTNRTQFEETWATLLGVLVTQPLVMEQEESPPEEDTERTQIHVLAVQAITSLVLSAMTVPVAGNPAVSCLEQQPRNKPLKALDTRFGRKLSMIRGIVEQEIQEMVSQRENTATHHSHQAWDPVPSLLPATTGALISHDKLLLQINPEREPGNMSYKLGQVSIHSVWLGNNITPLREEEWDEEEEEESDVPAPTSPPVSPVNSRKHRAGVDIHSCSQFLLELYSRWILPSSAARRTPVILISEVVRSLLVVSDLFTERTQFEMMYLTLTELRRVHPSEDEILIQYLVPATCKAAAVLGMDKTVAEPVSRLLESTLRSSHLPSQIGALHGILYVLECDLLDDTAKQLIPVVSDYLLSNLKGIAHCVNIHSQQHVLVMCATAFYLMENYPLDVGPEFSASVIQMCGVMLSGSEESTPSIIYHCALRGLERLLLSEQLSRLDTESLVKLSVDRVNVQSPHRAMAALGLMLTCMYTGKEKASPGRASDPSPATPDSESVIVAMERVSVLFDRIRKGFPCEARVVARILPQFLDDFFPPQDVMNKVIGEFLSNQQPYPQFMATVVYKVFQTLHSAGQSSMVRDWVMLSLSNFTQRTPVAMAMWSLSCFLVSASTSPWVSAILPHVISRMGKLEQVDVNLFCLVATDFYRHQIEEEFDRRAFQSVFEVVAAPGSPYHRLLACLQNVHKVTTC.

The disordered stretch occupies residues 1 to 65 (MATLEKLMKA…LPGPAEEPLH (65 aa)). Lys-9 is subject to N6-acetyllysine. A compositionally biased stretch (pro residues) spans 24 to 60 (QPPPQAPPPPPPPPPQPPQPPPQGQPPPPPPPLPGPA). Residues Lys-155 and Lys-213 each carry the N6-acetyllysine modification. 2 HEAT repeats span residues 183–220 (PYLV…SFGN) and 225–262 (NEIK…HSRR). N6-acetyllysine is present on Lys-322. A phosphoserine mark is found at Ser-396, Ser-398, and Ser-411. Lys-421 is subject to N6-acetyllysine. The segment at 470-481 (GHDIITEQPRSQ) is interaction with ZDHHC17. The segment at 495–558 (DLTSAATDGD…DSAVTPSDSS (64 aa)) is disordered. Positions 529–558 (DGTQASSPISDSSQTTTEGPDSAVTPSDSS) are enriched in polar residues. Gly-530 carries the N-myristoyl glycine lipid modification. Phosphoserine occurs at positions 620 and 623. HEAT repeat units follow at residues 782–819 (FSLV…SLCS) and 882–920 (KLQE…KLFY). The tract at residues 1146–1204 (KAALPSLTNPPSLSPIRRKGKEKEPGEQASTPMSPKKVGEASAASRQSDTSGPVTASKS) is disordered. Over residues 1149 to 1160 (LPSLTNPPSLSP) the composition is skewed to low complexity. Phosphoserine; by CDK5 is present on residues Ser-1159 and Ser-1179. Polar residues predominate over residues 1189-1204 (ASRQSDTSGPVTASKS). An HEAT 5 repeat occupies 1404–1441 (LFEPLVIKALKQYTTTTSVQLQKQVLDLLAQLVQLRVN). At Ser-1853 the chain carries Phosphoserine. The Nuclear export signal motif lies at 2372–2381 (IVISLARLPL). The disordered stretch occupies residues 2610 to 2637 (EEEWDEEEEEESDVPAPTSPPVSPVNSR). A compositionally biased stretch (acidic residues) spans 2611–2622 (EEWDEEEEEESD).

This sequence belongs to the huntingtin family. In terms of assembly, interacts with PFN1. Interacts through its N-terminus with PRPF40A. Interacts with PQBP1. Interacts with SETD2. Interacts with SH3GLB1. Interacts with SYVN. Interacts with TPR; the interaction is inhibited by forms of Huntingtin with expanded polyglutamine stretch. Interacts with ZDHHC13 (via ANK repeats). Interacts with ZDHHC17 (via ANK repeats). Interacts with F8A1/F8A2/F8A3. Found in a complex with F8A1/F8A2/F8A3, HTT and RAB5A; mediates the recruitment of HTT by RAB5A. In terms of processing, phosphorylation at Ser-1159 and Ser-1179 by CDK5 in response to DNA damage in nuclei of neurons protects neurons against polyglutamine expansion as well as DNA damage mediated toxicity. Cleaved by caspases downstream of the polyglutamine stretch. Post-translationally, myristoylated at Gly-530, following proteolytic cleavage at Asp-529. The highest level is seen throughout the brain, but it is also found in the stomach, heart, testis, adipose tissue, muscle, spleen, liver, and kidney.

The protein resides in the cytoplasm. It is found in the nucleus. The protein localises to the cytoplasmic vesicle. Its subcellular location is the autophagosome. Functionally, may play a role in microtubule-mediated transport or vesicle function. Promotes the formation of autophagic vesicles. In Mus musculus (Mouse), this protein is Huntingtin (Htt).